The chain runs to 141 residues: Putative pre-16S rRNA nuclease (141 aa).

This sequence belongs to the YqgF nuclease family.

It is found in the cytoplasm. In terms of biological role, could be a nuclease involved in processing of the 5'-end of pre-16S rRNA. The sequence is that of Putative pre-16S rRNA nuclease from Shewanella oneidensis (strain ATCC 700550 / JCM 31522 / CIP 106686 / LMG 19005 / NCIMB 14063 / MR-1).